Consider the following 514-residue polypeptide: Activin receptor type-2A (514 aa).

Residues 1–20 (MGAATKLAFAVFLISCSSAG) form the signal peptide. Residues 21-136 (SILGRSETKE…TSNPVTTKPP (116 aa)) are Extracellular-facing. Disulfide bonds link Cys-31–Cys-61, Cys-51–Cys-79, Cys-86–Cys-105, Cys-92–Cys-104, and Cys-106–Cys-111. 3 N-linked (GlcNAc...) asparagine glycosylation sites follow: Asn-46, Asn-67, and Asn-88. The helical transmembrane segment at 137–162 (LFNTLLYSLVPIMVVAVIVLFSFWMY) threads the bilayer. Residues 163–514 (RHHKLAYPPV…VDFPPKESSL (352 aa)) are Cytoplasmic-facing. In terms of domain architecture, Protein kinase spans 193 to 486 (LQLLEVKARG…EERIIQMQKL (294 aa)). ATP is bound by residues 199 to 207 (KARGRFGCV) and Lys-220. Residue Asp-323 is the Proton acceptor of the active site.

Belongs to the protein kinase superfamily. TKL Ser/Thr protein kinase family. TGFB receptor subfamily.

The protein resides in the cell membrane. It carries out the reaction L-threonyl-[receptor-protein] + ATP = O-phospho-L-threonyl-[receptor-protein] + ADP + H(+). It catalyses the reaction L-seryl-[receptor-protein] + ATP = O-phospho-L-seryl-[receptor-protein] + ADP + H(+). Its function is as follows. Receptor for activin A, activin B and inhibin A. Involved in transmembrane signaling. The chain is Activin receptor type-2A (acvr2a) from Xenopus laevis (African clawed frog).